Reading from the N-terminus, the 1915-residue chain is MEDGKRERWPTLMERLCSDGFAFPQYPIKPYHLKRIHRAVLHGNLEKLKYLLLTYYDANKRDRKERTALHLACATGQPEMVHLLVSRRCELNLCDREDRTPLIKAVQLRQEACATLLLQNGANPNITDFFGRTALHYAVYNEDTSMIEKLLSHGTNIEECSKCEYQPLLFAVSRRKVKMVEFLLKKKANVNAIDYLGRSALIHAVTLGEKDIVILLLQHNIDVLSRDAFRKIAGDYAIEAKNRVIFDLIYEYERKRYEDLPINSNPVSSQKQPALKATSGKEDSISNIATEIKDGQKSGTVSSQKQPALKDTSDKDDSVSNTATEIKDEQKSGTVLPAVEQCLNRSLYRPDAVAQPVTENEFSLESEIISKLYIPKRKIISPRSIKDVLPPVEEAVDRCLYLLDRFAQPVTKDKFALESENISEPYFTNRRTISQQSAENLDAACGIDKTENGNMFEDQNVDKEGKALPATGQKANVSPEQPPLFTHTVKDRDHISTRFLGGMDSLTSSEESSERPPLSTLTLKEADPSSKAAMRRKDSPPPGKVSSQKQPAEKATSDDKDSVSNIATEIKEGPISGTVSSQKQPAEKATSDEKDSVSNIATEIKKGQQSGTVSPQKQSAWKVIFKKKVSLLNIATRIMGGGKSGTVSSQKQPASKATSDKTDSALNIATEIKDGLQCGTVSSQKQPALKATTDEEDSVSNIATEIKDGEKSGTVSSQKQPALKATTDEEDSVSNIATEIKDGEKSGTVSSQKQPALKATTDEKDSVSNIATEIKDGEKSGTVSSQKPPALTATSDEEGSVLSIARENKDGEKSRTVSSRKKPALKATSDEKDSFSNITRGKKDGEISRKVSSQKPPTLKGTSDEEDSVLGIARENKDGEKSRTVSSEKPPGLKASSAEKDSVLNIARGKKDGEKTKRVSSRKKPSLEATSDEKDSFSNITREKKDGEISRKVSSQKPPALKGTSDEEDSVLGIARENKDGEKSRTVSSEKPPGLKATSDEKDSVLNIARGKKDGEKTRTVSSQKPPTLKATSDEEDSVLSIARENKDGEKSRTVSSEKPSGLKATSAEKDSVLNIARGKKYGEKTKRVSSRKKPALKATSDEKDSVLYIAREKKDGEKSRTVSSPKQPALKAICDKEDSVPNMATEKKDEQISGTVSCQKQPALKATSDKKDSVSNIPTEIKDGQQSGTVSSQKQPAWKATSVKKDSVSNIATEIKDGQIRGTVSPQKQSAQKVIFKKKVSLLNIATRITGGWKSGTEYPENLPTLKATIENKNSVLNTATKMKDVQTSTPAEQDLEMASEGEQKRLEEYENNQPQVKNQIHSRDDLDDIIQSSQTVSEDGDSLCCNCKNVILLIDQHEMKCKDCVHLLKIKNTFCLWKRLIKLKDNHCEQLRVKIRKLKNKASVLQKRISEKEEIKSQLKHEILELEKELCSLRFAIQQEKKKRRNVEEVHQKVREKLRITEEQYRIEADVTKPIKPALKSAEVELKTGGNNSNQVSETDEKEDLLHENRLMQDEIARLRLEKDTIKNQNLEKKYLKDFEIVKRKHEDLQKALKRNGETLAKTIACYSGQLAALTDENTTLRSKLEKQRESRQRLETEMQSYHCRLNAARCDHDQSHSSKRDQELAFQGTVDKCRHLQENLNSHVLILSLQLSKAESKSRVLKTELHYTGEALKEKALVFEHVQSELKQKQSQMKDIEKMYKSGYNTMEKCIEKQERFCQLKKQNMLLQQQLDDARNKADNQEKAILNIQARCDARVQNLQAECRKHRLLLEEDNKMLVNELNHSKEKECQYEKEKAEREVAVRQLQQKRDDVLNKGSATKALLDASSRHCTYLENGMQDSRKKLDQMRSQFQEIQDQLTATIRCTKEMEGDTQKLEVEHVMMRKIIKKQDDQIERLEKILQHSSLMLQVFES.

6 ANK repeats span residues 31 to 60, 64 to 93, 97 to 126, 130 to 159, 163 to 192, and 196 to 225; these read YHLK…DANK, KERT…ELNL, EDRT…NPNI, FGRT…NIEE, CEYQ…NVNA, and LGRS…DVLS. Disordered stretches follow at residues 261-331, 470-619, 639-663, 676-1203, and 1285-1304; these read PINS…DEQK, ATGQ…QKQS, MGGG…DKTD, LQCG…KATS, and KDVQ…SEGE. 2 stretches are compositionally biased toward polar residues: residues 262–272 and 297–306; these read INSNPVSSQKQ and KSGTVSSQKQ. Low complexity predominate over residues 505 to 521; the sequence is SLTSSEESSERPPLSTL. Basic and acidic residues-rich tracts occupy residues 551 to 562 and 585 to 596; these read PAEKATSDDKDS and PAEKATSDEKDS. Composition is skewed to polar residues over residues 597-619 and 645-657; these read VSNI…QKQS and GTVS…ASKA. 7 stretches are compositionally biased toward basic and acidic residues: residues 806 to 815, 874 to 883, 931 to 951, 976 to 985, 1044 to 1053, 1100 to 1121, and 1134 to 1152; these read RENKDGEKSR, SDEK…EISR, TSDE…EKSR, and ICDK…KDEQ. Over residues 1175–1196 the composition is skewed to polar residues; the sequence is VSNIPTEIKDGQQSGTVSSQKQ. Coiled coils occupy residues 1383 to 1466, 1504 to 1531, 1573 to 1614, and 1727 to 1814; these read IKLK…TEEQ, KEDL…IKNQ, LAAL…ARCD, and NMLL…KRDD. The tract at residues 1489-1508 is disordered; sequence KTGGNNSNQVSETDEKEDLL.

This sequence belongs to the ANKRD36 family.

In Homo sapiens (Human), this protein is Ankyrin repeat domain-containing protein 36A (ANKRD36).